Reading from the N-terminus, the 237-residue chain is MYNSNLLVIQKLLSTNAYLGHRIPTSDFQGYLYGFRNEMAIIDLEKTLICLRRTCNLIGSIISAKGHLLLVNTNPEYNKIIQQMAKKTNQSYINHKWIGGFLTNWKHMKKVKKHFQDFSAHPNLKDAFTSSPFDYFPRFKKMQKCFEGIMTHNIPDCLVIINANQNSMAILEANQLQIPIVALVDSNIPNRLHKLITYPVPVNDDSIKFVYLFCNLITKTVILSKRSQRPKVKVKRL.

It belongs to the universal ribosomal protein uS2 family.

It localises to the mitochondrion. The polypeptide is Small ribosomal subunit protein uS2m (RPS2) (Marchantia polymorpha (Common liverwort)).